A 509-amino-acid chain; its full sequence is 2,3-bisphosphoglycerate-independent phosphoglycerate mutase (509 aa).

Mn(2+) contacts are provided by Asp12 and Ser62. The active-site Phosphoserine intermediate is Ser62. Substrate contacts are provided by residues His123, 153-154 (RD), Arg185, Arg191, 260-263 (RPDR), and Lys333. Residues Asp400, His404, Asp441, His442, and His460 each contribute to the Mn(2+) site.

It belongs to the BPG-independent phosphoglycerate mutase family. Monomer. It depends on Mn(2+) as a cofactor.

It carries out the reaction (2R)-2-phosphoglycerate = (2R)-3-phosphoglycerate. The protein operates within carbohydrate degradation; glycolysis; pyruvate from D-glyceraldehyde 3-phosphate: step 3/5. In terms of biological role, catalyzes the interconversion of 2-phosphoglycerate and 3-phosphoglycerate. This Clostridium botulinum (strain Langeland / NCTC 10281 / Type F) protein is 2,3-bisphosphoglycerate-independent phosphoglycerate mutase.